Reading from the N-terminus, the 243-residue chain is Probable transcriptional regulatory protein BRE_29 (243 aa).

Belongs to the TACO1 family.

Its subcellular location is the cytoplasm. This is Probable transcriptional regulatory protein BRE_29 from Borrelia recurrentis (strain A1).